The primary structure comprises 644 residues: Beta-mannosyltransferase 2 (644 aa).

The Cytoplasmic portion of the chain corresponds to 1–6 (MRTRLN). The helical transmembrane segment at 7 to 27 (FLLLCIASVLSVIWIGVLLTW) threads the bilayer. Residues 28–644 (NDNNLGGISL…NDKKDLKIRQ (617 aa)) are Extracellular-facing. N-linked (GlcNAc...) asparagine glycosylation is present at asparagine 484. Residues 512–644 (TRGEAERRRR…NDKKDLKIRQ (133 aa)) adopt a coiled-coil conformation. Positions 517 to 644 (ERRRRVAEER…NDKKDLKIRQ (128 aa)) are disordered.

Belongs to the BMT family.

It localises to the membrane. Functionally, beta-mannosyltransferase involved in cell wall biosynthesis. Initiates the beta-mannosylation of core N-linked glycans. This chain is Beta-mannosyltransferase 2 (BMT2), found in Komagataella phaffii (strain GS115 / ATCC 20864) (Yeast).